The primary structure comprises 225 residues: Thymidine kinase (225 aa).

15-22 (GSMFSGKT) serves as a coordination point for ATP. The interval 85 to 110 (KKQNHRTTTQCRSGDGTNNPGGVIPS) is disordered. A compositionally biased stretch (polar residues) spans 90–104 (RTTTQCRSGDGTNNP). Residue 121 to 124 (DEAN) coordinates ATP. Glutamate 122 (proton acceptor) is an active-site residue. Residues cysteine 178, cysteine 181, cysteine 216, and cysteine 219 each coordinate Zn(2+).

It belongs to the thymidine kinase family. Homotetramer.

The protein localises to the cytoplasm. It catalyses the reaction thymidine + ATP = dTMP + ADP + H(+). The sequence is that of Thymidine kinase from Haloquadratum walsbyi (strain DSM 16790 / HBSQ001).